Consider the following 643-residue polypeptide: E3 ubiquitin-protein ligase AMFR (643 aa).

The segment at 39–67 (PEAGPGEPDQLTASLQPEPPAPARPSAGG) is disordered. 6 helical membrane-spanning segments follow: residues 82-102 (LFVW…AKLI), 122-142 (FWNF…VQTV), 145-165 (VVMW…VQLC), 186-206 (VLSL…VCSI), 215-235 (TLAF…HVIL), and 276-296 (HIHM…VIFM). An RING-type zinc finger spans residues 341–379 (CAICWDSMQAARKLPCGHLFHNSCLRSWLEQDTSCPTCR). The chain crosses the membrane as a helical span at residues 429-449 (IASWLPSFSVEVMHTTNILGI). The 43-residue stretch at 456 to 498 (QLNAMAHQIQEMFPQVPYHLVLQDLQLTRSVEITTDNILEGRI) folds into the CUE domain. Disordered stretches follow at residues 504–579 (TQRS…DERQ) and 596–624 (RFLN…PVTL). Phosphoserine is present on residues Ser-516, Ser-523, and Ser-542. The segment covering 548–563 (TLDFGEVEVEPSEVED) has biased composition (acidic residues). The segment covering 564–579 (FEARGSRFSKSADERQ) has biased composition (basic and acidic residues). Residues 622 to 640 (VTLRRRMLAAAAERRLQKQ) form a VCP/p97-interacting motif (VIM) region.

As to quaternary structure, interacts with RNF5. Also forms an ERAD complex containing VCP/p97, NGLY1; PSMC1; SAKS1 and RAD23B required for coupling retrotranslocation, ubiquitination and deglycosylation. Interacts with DERL1. Interacts (through a region distinct from the RING finger) with UBE2G2/UBC7. Component of the VCP/p97-AMFR/gp78 complex that enhances VCP/p97 binding to polyubiquitinated proteins for their degradation by the endoplasmic reticulum-associated degradation (ERAD) pathway. Interacts (via the VIM) with VCP/p97. Interacts (via its membrane domain) with INSIG1; the interaction initiates the sterol-mediated ubiquitination and degradation of HMGCR by the ERAD pathway. Interacts with AUP1, UBE2G2 and RNF139/TRC8; interaction with AUP1 facilitates interaction of AMFR with ubiquitin-conjugating enzyme UBE2G2 and ubiquitin ligase RNF139, leading to sterol-induced ubiquitination of HMGCR and its subsequent proteasomal degradation. Interacts with BAG6. Interacts with USP13 (via UBA 2 domain); the interaction is direct. Interacts with LMBR1L. Interacts with UBAC2 and CTNNB1. Interacts with C18orf32. In terms of assembly, (Microbial infection) Interacts with Staphylococcus aureus HIgB; this interaction regulates AMFR-mediated inflammation by promoting TAB3 ubiquitination to promote TAB3-TAK1 complex formation. Palmitoylation of the RING-type zing finger by ZDHHC6 promotes localization to the peripheral endoplasmic reticulum. Widely expressed.

It is found in the endoplasmic reticulum membrane. It carries out the reaction [E2 ubiquitin-conjugating enzyme]-S-ubiquitinyl-L-cysteine + [acceptor protein]-L-cysteine = [E2 ubiquitin-conjugating enzyme]-L-cysteine + [acceptor protein]-S-ubiquitinyl-L-cysteine.. It functions in the pathway protein modification; protein ubiquitination. Its function is as follows. E3 ubiquitin-protein ligase that mediates the polyubiquitination of lysine and cysteine residues on target proteins, such as CD3D, CYP3A4, CFTR, INSIG1, SOAT2/ACAT2 and APOB for proteasomal degradation. Component of a VCP/p97-AMFR/gp78 complex that participates in the final step of endoplasmic reticulum-associated degradation (ERAD). The VCP/p97-AMFR/gp78 complex is involved in the sterol-accelerated ERAD degradation of HMGCR through binding to the HMGCR-INSIG1 complex at the ER membrane. In addition, interaction of AMFR with AUP1 facilitates interaction of AMFR with ubiquitin-conjugating enzyme UBE2G2 and ubiquitin ligase RNF139, leading to sterol-induced HMGCR ubiquitination. The ubiquitinated HMGCR is then released from the ER into the cytosol for subsequent destruction. In addition to ubiquitination on lysine residues, catalyzes ubiquitination on cysteine residues: together with INSIG1, mediates polyubiquitination of SOAT2/ACAT2 at 'Cys-277', leading to its degradation when the lipid levels are low. Catalyzes ubiquitination and subsequent degradation of INSIG1 when cells are depleted of sterols. Mediates polyubiquitination of INSIG2 at 'Cys-215' in some tissues, leading to its degradation. Also regulates ERAD through the ubiquitination of UBL4A a component of the BAG6/BAT3 complex. Also acts as a scaffold protein to assemble a complex that couples ubiquitination, retranslocation and deglycosylation. Mediates tumor invasion and metastasis as a receptor for the GPI/autocrine motility factor. In association with LMBR1L and UBAC2, negatively regulates the canonical Wnt signaling pathway in the lymphocytes by promoting the ubiquitin-mediated degradation of CTNNB1 and Wnt receptors FZD6 and LRP6. Regulates NF-kappa-B and MAPK signaling pathways by mediating 'Lys-27'-linked polyubiquitination of TAB3 and promoting subsequent TAK1/MAP3K7 activation. Required for proper lipid homeostasis. The protein is E3 ubiquitin-protein ligase AMFR of Homo sapiens (Human).